A 524-amino-acid polypeptide reads, in one-letter code: Pentatricopeptide repeat-containing protein At1g02150 (524 aa).

PPR repeat units lie at residues 168 to 202 (DRRVYGSLLNAYVRAKSREKAEALLNTMRDKGYAL), 203 to 237 (HPLPFNVMMTLYMNLREYDKVDAMVFEMKQKDIRL), 238 to 268 (DIYSYNIWLSSCGSLGSVEKMELVYQQMKSD), 274 to 304 (NWTTFSTMATMYIKMGETEKAEDALRKVEAR), 309 to 339 (NRIPYHYLLSLYGSLGNKKELYRVWHVYKSV), 344 to 378 (PNLGYHALVSSLVRMGDIEGAEKVYEEWLPVKSSY), and 379 to 413 (DPRIPNLLMNAYVKNDQLETAEGLFDHMVEMGGKP).

It belongs to the PPR family. P subfamily.

In Arabidopsis thaliana (Mouse-ear cress), this protein is Pentatricopeptide repeat-containing protein At1g02150.